The chain runs to 314 residues: Acetaldehyde dehydrogenase 1 (314 aa).

15–18 provides a ligand contact to NAD(+); sequence SGNI. C133 serves as the catalytic Acyl-thioester intermediate. Residues 164–172 and N291 contribute to the NAD(+) site; that span reads SAGPGTRAN.

Belongs to the acetaldehyde dehydrogenase family.

It catalyses the reaction acetaldehyde + NAD(+) + CoA = acetyl-CoA + NADH + H(+). In Paraburkholderia xenovorans (strain LB400), this protein is Acetaldehyde dehydrogenase 1.